A 269-amino-acid polypeptide reads, in one-letter code: Formamidopyrimidine-DNA glycosylase (269 aa).

The Schiff-base intermediate with DNA role is filled by Pro2. Glu3 serves as the catalytic Proton donor. The active-site Proton donor; for beta-elimination activity is the Lys57. 3 residues coordinate DNA: His90, Arg109, and Lys150. Residues 235–269 (LVYGKAGEPCPECGEPLQELKIGQRNTFFCNECQQ) form an FPG-type zinc finger. The active-site Proton donor; for delta-elimination activity is the Arg259.

The protein belongs to the FPG family. As to quaternary structure, monomer. Requires Zn(2+) as cofactor.

The catalysed reaction is Hydrolysis of DNA containing ring-opened 7-methylguanine residues, releasing 2,6-diamino-4-hydroxy-5-(N-methyl)formamidopyrimidine.. The enzyme catalyses 2'-deoxyribonucleotide-(2'-deoxyribose 5'-phosphate)-2'-deoxyribonucleotide-DNA = a 3'-end 2'-deoxyribonucleotide-(2,3-dehydro-2,3-deoxyribose 5'-phosphate)-DNA + a 5'-end 5'-phospho-2'-deoxyribonucleoside-DNA + H(+). Functionally, involved in base excision repair of DNA damaged by oxidation or by mutagenic agents. Acts as a DNA glycosylase that recognizes and removes damaged bases. Has a preference for oxidized purines, such as 7,8-dihydro-8-oxoguanine (8-oxoG). Has AP (apurinic/apyrimidinic) lyase activity and introduces nicks in the DNA strand. Cleaves the DNA backbone by beta-delta elimination to generate a single-strand break at the site of the removed base with both 3'- and 5'-phosphates. The chain is Formamidopyrimidine-DNA glycosylase from Vibrio parahaemolyticus serotype O3:K6 (strain RIMD 2210633).